Consider the following 301-residue polypeptide: 33 kDa chaperonin (301 aa).

Intrachain disulfides connect Cys239–Cys241 and Cys272–Cys275.

The protein belongs to the HSP33 family. Under oxidizing conditions two disulfide bonds are formed involving the reactive cysteines. Under reducing conditions zinc is bound to the reactive cysteines and the protein is inactive.

It is found in the cytoplasm. Its function is as follows. Redox regulated molecular chaperone. Protects both thermally unfolding and oxidatively damaged proteins from irreversible aggregation. Plays an important role in the bacterial defense system toward oxidative stress. The chain is 33 kDa chaperonin from Nostoc sp. (strain PCC 7120 / SAG 25.82 / UTEX 2576).